The primary structure comprises 347 residues: Protein O-mannose kinase (347 aa).

The Cytoplasmic segment spans residues 1-14; the sequence is MGGTAVGGVIGVRC. A helical; Signal-anchor for type II membrane protein membrane pass occupies residues 15–35; the sequence is GVPAVLLCLGALLCANVLLYF. Topologically, residues 36 to 347 are lumenal; the sequence is YLDALYQNTN…SQSQRVRDML (312 aa). One can recognise a Protein kinase domain in the interval 79-347; sequence VRRVKLIGQG…SQSQRVRDML (269 aa).

The protein belongs to the protein kinase superfamily. Ser/Thr protein kinase family. STKL subfamily.

It localises to the endoplasmic reticulum membrane. The catalysed reaction is 3-O-[beta-D-GalNAc-(1-&gt;3)-beta-D-GlcNAc-(1-&gt;4)-alpha-D-Man]-L-Thr-[protein] + ATP = 3-O-[beta-D-GalNAc-(1-&gt;3)-beta-D-GlcNAc-(1-&gt;4)-(O-6-P-alpha-D-Man)]-Thr-[protein] + ADP + H(+). Its function is as follows. Protein O-mannose kinase that specifically mediates phosphorylation at the 6-position of an O-mannose of the trisaccharide (N-acetylgalactosamine (GalNAc)-beta-1,3-N-acetylglucosamine (GlcNAc)-beta-1,4-mannose) to generate phosphorylated O-mannosyl trisaccharide (N-acetylgalactosamine-beta-1,3-N-acetylglucosamine-beta-1,4-(phosphate-6-)mannose). Phosphorylated O-mannosyl trisaccharide is a carbohydrate structure present in alpha-dystroglycan (dag1), which is required for binding laminin G-like domain-containing extracellular proteins with high affinity. Only shows kinase activity when the GalNAc-beta-3-GlcNAc-beta-terminus is linked to the 4-position of O-mannose, suggesting that this disaccharide serves as the substrate recognition motif. In Danio rerio (Zebrafish), this protein is Protein O-mannose kinase (pomk).